The primary structure comprises 374 residues: Autophagy-related protein 18e (374 aa).

4 WD repeats span residues Lys-28–Ile-66, Glu-72–Glu-117, Ala-202–Glu-242, and Val-247–Asp-286.

This sequence belongs to the WD repeat PROPPIN family. Component of the PI(3,5)P2 regulatory complex at least composed of ATG18, SAC/FIG4, FAB1 and VAC14.

It is found in the preautophagosomal structure membrane. Its subcellular location is the vacuole membrane. The PI(3,5)P2 regulatory complex regulates both the synthesis and turnover of phosphatidylinositol 3,5-bisphosphate (PtdIns(3,5)P2). Required for autophagy. This is Autophagy-related protein 18e (ATG18E) from Arabidopsis thaliana (Mouse-ear cress).